The following is a 320-amino-acid chain: Aminoacyl tRNA synthase complex-interacting multifunctional protein 2 (320 aa).

The disordered stretch occupies residues 31-52 (HSKTTSPATDAGHVQETSEPSL). Ser36 is subject to Phosphoserine. An interaction with PRKN region spans residues 82–162 (TPDADLDVTN…HTHSSVKNVP (81 aa)). The segment at 162-225 (PENLLKCFGE…FLFSLFGQKH (64 aa)) is interaction with TP53. Residues 220–317 (LFGQKHSAVN…NLVPFSTALQ (98 aa)) enclose the GST C-terminal domain.

As to quaternary structure, part of the multisynthetase complex (MSC), a multisubunit complex that groups tRNA ligases for Arg (RARS1), Asp (DARS1), Gln (QARS1), Ile (IARS1), Leu (LARS1), Lys (KARS1), Met (MARS1) the bifunctional ligase for Glu and Pro (EPRS1) and the auxiliary subunits AIMP1/p43, AIMP2/p38 and EEF1E1/p18. Interacts (via N-terminus) with KARS1. Interacts with EPRS1. Forms a linear complex that contains MARS1, EEF1E1, EPRS1 and AIMP2 that is at the core of the multisubunit complex. Binds FUBP1 (via C-terminus). Interacts in both its unphosphorylated and phosphorylated forms with p53/TP53 (via N-terminus) in the nucleus following UV irradiation. Interacts (via N-terminus) with PRKN/parkin (via first RING-type domain). Interacts with TARS3. Phosphorylated on serine residues in response to UV irradiation. Post-translationally, ubiquitinated by PRKN, leading to its degradation by the proteasome.

The protein localises to the cytoplasm. It is found in the cytosol. It localises to the nucleus. Required for assembly and stability of the aminoacyl-tRNA synthase complex. Mediates ubiquitination and degradation of FUBP1, a transcriptional activator of MYC, leading to MYC down-regulation which is required for aveolar type II cell differentiation. Blocks MDM2-mediated ubiquitination and degradation of p53/TP53. Functions as a proapoptotic factor. This chain is Aminoacyl tRNA synthase complex-interacting multifunctional protein 2 (AIMP2), found in Cricetulus griseus (Chinese hamster).